The primary structure comprises 817 residues: DNA replication licensing factor Mcm6 (817 aa).

The C4-type zinc finger occupies 152–179; it reads CLDCQTEIRNVEQQFKFTNPTICRNPVC. In terms of domain architecture, MCM spans 338–544; sequence LYQNLISSLF…VVDYAIARKI (207 aa). The ATP site is built by S391, T392, A393, K394, S395, and N496. The Arginine finger motif lies at 520–523; it reads SRFD. ADP contacts are provided by R611 and E614.

The protein belongs to the MCM family. Component of the Mcm2-7 complex. The complex forms a toroidal hexameric ring with the proposed subunit order Mcm2-Mcm6-Mcm4-Mcm7-Mcm3-Mcm5. The heterodimers of Mcm4/Mcm6 and Mcm3/Mcm5 interact with Mcm2 and Mcm7. In terms of tissue distribution, in stage 12 embryos, strongly expressed in the CNS and weakly in the gut.

Its subcellular location is the nucleus. It carries out the reaction ATP + H2O = ADP + phosphate + H(+). Acts as a component of the Mcm2-7 complex (Mcm complex) which is the putative replicative helicase essential for 'once per cell cycle' DNA replication initiation and elongation in eukaryotic cells. Core component of CDC45-MCM-GINS (CMG) helicase, the molecular machine that unwinds template DNA during replication, and around which the replisome is built. The active ATPase sites in the Mcm2-7 ring are formed through the interaction surfaces of two neighboring subunits such that a critical structure of a conserved arginine finger motif is provided in trans relative to the ATP-binding site of the Walker A box of the adjacent subunit. The six ATPase active sites, however, are likely to contribute differentially to the complex helicase activity Required for DNA replication and cell proliferation. Required for mitotic cycles, endocycles, and the special S phase associated with the amplification of chorion genes; has a role in origin unwinding or fork elongation at chorion loci. The sequence is that of DNA replication licensing factor Mcm6 from Drosophila melanogaster (Fruit fly).